The primary structure comprises 89 residues: Dolichol-phosphate mannose synthase subunit 3 (89 aa).

Transmembrane regions (helical) follow at residues 7–27 and 33–53; these read ILSLLVAISAFWIGLLQAAII and WLLPIYFVVSLGCYGLLMVGV.

The protein belongs to the DPM3 family. Component of the dolichol-phosphate mannose (DPM) synthase complex composed of DPMS1, DPMS2 and DPMS3; in the complex interacts directly with DPMS1 and DPMS2.

The protein localises to the endoplasmic reticulum membrane. It participates in protein modification; protein glycosylation. In terms of biological role, regulates the biosynthesis of dolichol phosphate-mannose. Regulatory subunit of the dolichol-phosphate mannose (DPM) synthase complex; essential for the ER localization and stable expression of DPMS1. This chain is Dolichol-phosphate mannose synthase subunit 3, found in Arabidopsis thaliana (Mouse-ear cress).